The sequence spans 141 residues: Protein stum homolog (141 aa).

Serine 26 carries the post-translational modification Phosphoserine. 2 helical membrane passes run 51-71 (FPVAVICLFLNTFVPGLGTFV) and 87-107 (RHVCCVFWLNIAAALIQVLTA).

It belongs to the SPEC3 family. Stum subfamily.

It localises to the membrane. This Mus musculus (Mouse) protein is Protein stum homolog.